Here is a 200-residue protein sequence, read N- to C-terminus: Recombination protein RecR (200 aa).

A C4-type zinc finger spans residues 59 to 74 (CEKCNTFTEAQICEVC). The Toprim domain maps to 82-177 (ALLCVVETPA…AVTRLARGVP (96 aa)).

It belongs to the RecR family.

Functionally, may play a role in DNA repair. It seems to be involved in an RecBC-independent recombinational process of DNA repair. It may act with RecF and RecO. In Burkholderia mallei (strain NCTC 10247), this protein is Recombination protein RecR.